Reading from the N-terminus, the 104-residue chain is PE-PGRS family protein PE_PGRS60 (104 aa).

Residues 1 to 60 enclose the PE domain; that stretch reads MSYVIAAPEALVAAATDLATLGSTIGAANAAAAGSTTALLTAGADEVSAAIAAYSECTAR. Residues 64-104 are disordered; the sequence is HSVRGRRRSMSGSCRPWPQVGAPMRPPRPPASRRCRARSIC. Residues 94-104 show a composition bias toward basic residues; that stretch reads ASRRCRARSIC.

Belongs to the mycobacterial PE family. PGRS subfamily.

Functionally, binds fibronectin. May contribute to pathogenicity. The polypeptide is PE-PGRS family protein PE_PGRS60 (Mycobacterium tuberculosis (strain ATCC 25618 / H37Rv)).